The sequence spans 523 residues: Monocarboxylate transporter 7 (523 aa).

At 1 to 21 (MTQNKLKLCSKANVYTEVPDG) the chain is on the cytoplasmic side. The helical transmembrane segment at 22–42 (GWGWAVAVSFFFVEVFTYGII) threads the bilayer. Residues 43 to 62 (KTFGVFFNDLMDSFNESNSR) lie on the Extracellular side of the membrane. A helical transmembrane segment spans residues 63–83 (ISWIISICVFVLTFSAPLATV). The Cytoplasmic segment spans residues 84-91 (LSNRFGHR). The helical transmembrane segment at 92–112 (LVVMLGGLLVSTGMVAASFSQ) threads the bilayer. The Extracellular portion of the chain corresponds to 113 to 118 (EVSHMY). A helical membrane pass occupies residues 119-139 (VAIGIISGLGYCFSFLPTVTI). At 140–149 (LSQYFGKRRS) the chain is on the cytoplasmic side. The helical transmembrane segment at 150–170 (IVTAVASTGECFAVFAFAPAI) threads the bilayer. The Extracellular segment spans residues 171–184 (MALKERIGWRYSLL). Residues 185-205 (FVGLLQLNIVIFGALLRPIFI) form a helical membrane-spanning segment. Residues 206–299 (RGPASPKIVI…KEKSFICYAL (94 aa)) are Cytoplasmic-facing. Residues Ser234, Ser237, Ser240, and Ser247 each carry the phosphoserine modification. A helical membrane pass occupies residues 300 to 320 (FGLFATLGFFAPSLYIIPLGI). Residues 321 to 330 (SLGIDQDRAA) are Extracellular-facing. Residues 331–351 (FLLSTMAIAEVFGRIGAGFVL) traverse the membrane as a helical segment. At 352 to 358 (NREPIRK) the chain is on the cytoplasmic side. Residues 359 to 379 (IYIELICVILLTVSLFAFTFA) form a helical membrane-spanning segment. At 380 to 381 (TE) the chain is on the extracellular side. A helical membrane pass occupies residues 382 to 402 (FWGLMSCSIFFGFMVGTIGGT). At 403 to 423 (HIPLLAEDDVVGIEKMSSAAG) the chain is on the cytoplasmic side. A helical membrane pass occupies residues 424–444 (VYIFIQSIAGLAGPPLAGLLV). At 445-452 (DQSKIYSR) the chain is on the extracellular side. A helical transmembrane segment spans residues 453 to 473 (AFYSCAAGMALAAVCLALVRP). The Cytoplasmic segment spans residues 474–523 (CKMGLCQHHHSGETKVVSHRGKTLQDIPEDFLEMDLAKNEHRVHVQMEPV).

The protein belongs to the major facilitator superfamily. Monocarboxylate porter (TC 2.A.1.13) family. In terms of assembly, forms functional complexes with BSG/CD147 or EMB/GP70 ancillary proteins.

The protein localises to the basolateral cell membrane. It carries out the reaction taurine(out) = taurine(in). Functionally, monocarboxylate transporter selective for taurine. May associate with BSG/CD147 or EMB/GP70 ancillary proteins to mediate facilitative efflux or influx of taurine across the plasma membrane. The transport is pH- and sodium-independent. Rather low-affinity, is likely effective for taurine transport in tissues where taurine is present at high concentrations. The sequence is that of Monocarboxylate transporter 7 from Homo sapiens (Human).